The primary structure comprises 319 residues: tRNA dimethylallyltransferase (319 aa).

16 to 23 (GPTASGKS) is an ATP binding site. Residue 18–23 (TASGKS) participates in substrate binding. Residues 46–49 (DSMV) form an interaction with substrate tRNA region.

This sequence belongs to the IPP transferase family. As to quaternary structure, monomer. It depends on Mg(2+) as a cofactor.

It carries out the reaction adenosine(37) in tRNA + dimethylallyl diphosphate = N(6)-dimethylallyladenosine(37) in tRNA + diphosphate. Its function is as follows. Catalyzes the transfer of a dimethylallyl group onto the adenine at position 37 in tRNAs that read codons beginning with uridine, leading to the formation of N6-(dimethylallyl)adenosine (i(6)A). The polypeptide is tRNA dimethylallyltransferase (Cutibacterium acnes (strain DSM 16379 / KPA171202) (Propionibacterium acnes)).